We begin with the raw amino-acid sequence, 250 residues long: tRNA (guanine-N(1)-)-methyltransferase (250 aa).

S-adenosyl-L-methionine is bound by residues Gly116 and 136–141 (IGDYVL).

Belongs to the RNA methyltransferase TrmD family. As to quaternary structure, homodimer.

Its subcellular location is the cytoplasm. The catalysed reaction is guanosine(37) in tRNA + S-adenosyl-L-methionine = N(1)-methylguanosine(37) in tRNA + S-adenosyl-L-homocysteine + H(+). Its function is as follows. Specifically methylates guanosine-37 in various tRNAs. This chain is tRNA (guanine-N(1)-)-methyltransferase, found in Pseudomonas fluorescens (strain SBW25).